A 422-amino-acid chain; its full sequence is DNA (cytosine-5)-methyltransferase 3-like (422 aa).

Over residues 1-11 (MGSRETPSSCS) the composition is skewed to polar residues. Residues 1 to 50 (MGSRETPSSCSKTHETLNLETPESSSTDPDSPLEEQWPKSAPDLKEEDSM) are disordered. Positions 20 to 30 (ETPESSSTDPD) are enriched in low complexity. One can recognise an ADD domain in the interval 76–208 (EVNVNQRNIE…LKAFHDREGA (133 aa)). A GATA-type; atypical zinc finger spans residues 87–117 (ICLCCGSLQVYAQHPLFEGGICAPCKDKFLE). The PHD-type; atypical zinc finger occupies 128–184 (QSYCTICCSGHTLFICESPDCTRCYCFECVDILVGPGTSERINAMACWVCFLCLPFS).

Homodimer. Heterotetramer composed of 1 DNMT3A homodimer and 2 DNMT3L subunits (DNMT3L-DNMT3A-DNMT3A-DNMT3L). Interacts with histone H3 (via N-terminus); interaction is strongly inhibited by methylation at lysine 4 (H3K4me). Interacts with EZH2; the interaction is direct. Interacts with SPOCD1.

The protein resides in the nucleus. Catalytically inactive regulatory factor of DNA methyltransferases that can either promote or inhibit DNA methylation depending on the context. Essential for the function of DNMT3A and DNMT3B: activates DNMT3A and DNMT3B by binding to their catalytic domain. Acts by accelerating the binding of DNA and S-adenosyl-L-methionine (AdoMet) to the methyltransferases and dissociates from the complex after DNA binding to the methyltransferases. Recognizes unmethylated histone H3 lysine 4 (H3K4me0) and induces de novo DNA methylation by recruitment or activation of DNMT3. Plays a key role in embryonic stem cells and germ cells. In germ cells, required for the methylation of imprinted loci together with DNMT3A. In male germ cells, specifically required to methylate retrotransposons, preventing their mobilization. Plays a key role in embryonic stem cells (ESCs) by acting both as an positive and negative regulator of DNA methylation. While it promotes DNA methylation of housekeeping genes together with DNMT3A and DNMT3B, it also acts as an inhibitor of DNA methylation at the promoter of bivalent genes. Interacts with the EZH2 component of the PRC2/EED-EZH2 complex, preventing interaction of DNMT3A and DNMT3B with the PRC2/EED-EZH2 complex, leading to maintain low methylation levels at the promoters of bivalent genes. Promotes differentiation of ESCs into primordial germ cells by inhibiting DNA methylation at the promoter of RHOX5, thereby activating its expression. This chain is DNA (cytosine-5)-methyltransferase 3-like (Dnmt3l), found in Rattus norvegicus (Rat).